Reading from the N-terminus, the 988-residue chain is Isoleucine--tRNA ligase (988 aa).

The 'HIGH' region motif lies at 60 to 70; that stretch reads PYANGALHMGH. An L-isoleucyl-5'-AMP-binding site is contributed by Glu570. Residues 611 to 615 carry the 'KMSKS' region motif; it reads KMSKS. Lys614 serves as a coordination point for ATP. Zn(2+) is bound by residues Cys957, Cys960, Cys977, and Cys980.

It belongs to the class-I aminoacyl-tRNA synthetase family. IleS type 1 subfamily. Monomer. The cofactor is Zn(2+).

It localises to the cytoplasm. It catalyses the reaction tRNA(Ile) + L-isoleucine + ATP = L-isoleucyl-tRNA(Ile) + AMP + diphosphate. Its function is as follows. Catalyzes the attachment of isoleucine to tRNA(Ile). As IleRS can inadvertently accommodate and process structurally similar amino acids such as valine, to avoid such errors it has two additional distinct tRNA(Ile)-dependent editing activities. One activity is designated as 'pretransfer' editing and involves the hydrolysis of activated Val-AMP. The other activity is designated 'posttransfer' editing and involves deacylation of mischarged Val-tRNA(Ile). The polypeptide is Isoleucine--tRNA ligase (Synechocystis sp. (strain ATCC 27184 / PCC 6803 / Kazusa)).